The following is a 437-amino-acid chain: Enolase 1 (437 aa).

A Glycyl lysine isopeptide (Lys-Gly) (interchain with G-Cter in ubiquitin) cross-link involves residue K60. Residues S119 and S138 each carry the phosphoserine modification. The substrate site is built by H160 and E169. Position 188 is a phosphoserine (S188). E212 functions as the Proton donor in the catalytic mechanism. A Glycyl lysine isopeptide (Lys-Gly) (interchain with G-Cter in ubiquitin) cross-link involves residue K243. Mg(2+)-binding residues include D247 and E296. E296 provides a ligand contact to substrate. A Phosphothreonine modification is found at T313. Substrate is bound at residue D321. Mg(2+) is bound at residue D321. T324 bears the Phosphothreonine mark. The active-site Proton acceptor is K346. Residue K358 forms a Glycyl lysine isopeptide (Lys-Gly) (interchain with G-Cter in ubiquitin) linkage. Residues 373–376 (SHRS) and K397 each bind substrate.

This sequence belongs to the enolase family. Homodimer. Mg(2+) serves as cofactor.

It is found in the cytoplasm. It catalyses the reaction (2R)-2-phosphoglycerate = phosphoenolpyruvate + H2O. It participates in carbohydrate degradation; glycolysis; pyruvate from D-glyceraldehyde 3-phosphate: step 4/5. The protein is Enolase 1 (ENO1) of Saccharomyces cerevisiae (strain ATCC 204508 / S288c) (Baker's yeast).